A 249-amino-acid chain; its full sequence is UPF0246 protein Lreu_0493 (249 aa).

Belongs to the UPF0246 family.

The chain is UPF0246 protein Lreu_0493 from Limosilactobacillus reuteri (strain DSM 20016) (Lactobacillus reuteri).